A 586-amino-acid chain; its full sequence is Transmembrane protease serine 13 (586 aa).

Disordered regions lie at residues 1–115 (MERD…VTTS) and 131–157 (PIRSSPARSAPATRATRESPGTSLPKF). Residues 1–165 (MERDSHGNAS…KFTWREGQKQ (165 aa)) lie on the Cytoplasmic side of the membrane. One copy of the 1-1 repeat lies at 9–13 (ASPAR). The segment at 9–93 (ASPARTPSAG…ASPARASPAL (85 aa)) is 13 X 5 AA repeats of A-S-P-A-[GLQR]. Residues 14 to 18 (TPSAG) form a 2-1; approximate repeat. The span at 14-52 (TPSAGASPAQASPAGTPPGRASPAQASPAQASPAGTPPG) shows a compositional bias: low complexity. The interval 14 to 68 (TPSAGASPAQASPAGTPPGRASPAQASPAQASPAGTPPGRASPAQASPAGTPPGR) is 4 X 5 AA repeats of T-P-P-G-R. 10 tandem repeats follow at residues 19–23 (ASPAQ), 24–28 (ASPAG), 29–33 (TPPGR), 34–38 (ASPAQ), 39–43 (ASPAQ), 44–48 (ASPAG), 49–53 (TPPGR), 54–58 (ASPAQ), 59–63 (ASPAG), and 64–68 (TPPGR). A 1-9; approximate repeat occupies 69-78 (ASPGRASPAQ). Low complexity-rich tracts occupy residues 69–111 (ASPG…RSAS) and 133–144 (RSSPARSAPATR). 3 repeat units span residues 79–83 (ASPAQ), 84–88 (ASPAR), and 89–93 (ASPAL). The chain crosses the membrane as a helical; Signal-anchor for type II membrane protein span at residues 166–186 (LPLIGCVLLLIALVVSLIILF). The Extracellular portion of the chain corresponds to 187 to 586 (QFWQGHTGIR…GGDPGGAPRL (400 aa)). The SRCR domain occupies 195–325 (IRYKEQRESC…HCGLRAMTGR (131 aa)). The 23-residue stretch at 204–226 (CPKHAVRCDGVVDCKLKSDELGC) folds into the LDL-receptor class A domain. Disulfide bonds link Cys250-Cys314, Cys263-Cys317, and Cys351-Cys367. N-linked (GlcNAc...) asparagine glycosylation is found at Asn255 and Asn292. A Peptidase S1 domain is found at 326–559 (IVGGALASDS…VLPWIYSKME (234 aa)). His366 serves as the catalytic Charge relay system. Residue Asn405 is glycosylated (N-linked (GlcNAc...) asparagine). The Charge relay system role is filled by Asp414. Residue Asn445 is glycosylated (N-linked (GlcNAc...) asparagine). 3 disulfide bridges follow: Cys448-Cys517, Cys480-Cys496, and Cys507-Cys535. Ser511 functions as the Charge relay system in the catalytic mechanism. A compositionally biased stretch (polar residues) spans 565-574 (QDTAPSRLGT). Residues 565 to 586 (QDTAPSRLGTSSGGDPGGAPRL) are disordered. The segment covering 575-586 (SSGGDPGGAPRL) has biased composition (gly residues).

This sequence belongs to the peptidase S1 family. Interacts with SPINT1/HAI-1; the interaction promotes the phosphorylation and cell membrane localization of TMPRSS13. Interacts with SPINT2/HAI-2; the interaction promotes the phosphorylation and cell membrane localization of TMPRSS13. The inactive zymogen is post-translationally modified and then trafficked to the cell surface, whereby it undergoes autocatalytic cleavage resulting in an activated form that is released extracellularly. In terms of processing, phosphorylation is required for localization at the cell surface. Phosphorylation increases following inhibition of protease activity by SPINT2/HAI-2. Post-translationally, N-glycosylation of Asn-405 and Asn-445 is required for exit from the endoplasmic reticulum and trafficking to the cell surface. Also required for autocleavage of the zymogen, activation and secretion of the mature protein. Expressed in placenta. In terms of tissue distribution, predominantly expressed in lung, placenta, pancreas, and prostate. As to expression, expressed in lung, placenta, pancreas, and prostate. Weakly expressed in testis and peripheral blood lymphocytes.

The protein localises to the cell membrane. It is found in the secreted. The protein resides in the cytoplasm. Cleavage of HGF is inhibited by SPINT1/HAI-1 via the BPTI/Kunitz inhibitor 1 domain. In terms of biological role, serine protease. Cleaves the proform of PRSS8/prostasin to form the active protein. Cleaves the proform of HGF to form the active protein which promotes MAPK signaling. Promotes the formation of the stratum corneum and subsequently the epidermal barrier in embryos. In Homo sapiens (Human), this protein is Transmembrane protease serine 13 (TMPRSS13).